The following is a 689-amino-acid chain: Putative pentatricopeptide repeat-containing protein At3g15130 (689 aa).

PPR repeat units follow at residues 5 to 39 (QRQN…GSGL), 40 to 70 (NLIT…MPER), 71 to 105 (NVVS…GIYP), 106 to 140 (NEFT…GFEM), 141 to 171 (MVEV…IVDR), 172 to 206 (SLIS…NIKE), 209 to 243 (DEFT…GFHC), 246 to 276 (SATI…IKEK), 277 to 311 (TMIS…NSQI), 312 to 342 (DSFA…AVKL), 347 to 377 (ETSV…MQLK), 378 to 412 (DVIS…NIEP), 413 to 448 (DEVC…GIKP), and 449 to 479 (RVEH…MPIK). The type E motif stretch occupies residues 484-559 (IWQTLLSLCR…EAGMSWVEIE (76 aa)). The tract at residues 560-590 (REVHFFRSGEDSHPLTPVIQETLKEAERRLR) is type E(+) motif. Residues 592-689 (ELGYVYGLKH…DGCCSCGDYW (98 aa)) form a type DYW motif region.

Belongs to the PPR family. PCMP-H subfamily.

This Arabidopsis thaliana (Mouse-ear cress) protein is Putative pentatricopeptide repeat-containing protein At3g15130 (PCMP-H86).